The sequence spans 206 residues: Outer-membrane lipoprotein LolB (206 aa).

An N-terminal signal peptide occupies residues 1–18; it reads MKTFKFLTALFATAILTA. Cys-19 is lipidated: N-palmitoyl cysteine. Cys-19 carries the S-diacylglycerol cysteine lipid modification.

The protein belongs to the LolB family. As to quaternary structure, monomer.

The protein resides in the cell outer membrane. Its function is as follows. Plays a critical role in the incorporation of lipoproteins in the outer membrane after they are released by the LolA protein. This Haemophilus influenzae (strain PittEE) protein is Outer-membrane lipoprotein LolB.